The sequence spans 105 residues: Nucleoid-associated protein SE_2306 (105 aa).

The segment at 1 to 40 (MRGGGNMQQMMKQMQKMQKKMAQEQEKLKEERVAGTAGGG) is disordered. Low complexity predominate over residues 7–16 (MQQMMKQMQK). Residues 21-33 (MAQEQEKLKEERV) are compositionally biased toward basic and acidic residues.

Belongs to the YbaB/EbfC family. Homodimer.

It is found in the cytoplasm. Its subcellular location is the nucleoid. In terms of biological role, binds to DNA and alters its conformation. May be involved in regulation of gene expression, nucleoid organization and DNA protection. The polypeptide is Nucleoid-associated protein SE_2306 (Staphylococcus epidermidis (strain ATCC 12228 / FDA PCI 1200)).